Consider the following 209-residue polypeptide: DNA ADP-ribosyl transferase (209 aa).

Residues 9 to 209 (TPIYHITHID…RVCIRKDWYY (201 aa)) enclose the DarT domain. NAD(+) is bound by residues 13-15 (HIT), Gly-22, and Leu-30. Positions 35–53 (SPPKQRSIAYAHIQERRNR) are NAD(+)-binding element. The DNA-binding element occupies 44 to 50 (YAHIQER). Arg-51 contacts NAD(+). Arg-51 functions as the Proton acceptor in the catalytic mechanism. DNA-binding regions lie at residues 75-80 (RSPMLY), 145-148 (SYWA), and 154-158 (REKKQ). Residues 116 to 160 (TDRHGVLSHARFFRQLEELAQLDWEAIQASYWADPPELREKKQAE) are ADP-ribosylating turn-turn loop. Glu-160 is an active-site residue.

Belongs to the DarT ADP-ribosyltransferase family. As to quaternary structure, interacts with cognate antitoxin DarG (via C-terminus); this heterodimeric complex neutralizes the toxic effect of DarT by preventing ssDNA binding to DarT and consequently inactivating the toxin by direct protein-protein interactions.

It catalyses the reaction a thymidine in DNA + NAD(+) = an N-(ADP-alpha-D-ribosyl)-thymidine in DNA + nicotinamide + H(+). Toxic component of the hybrid type II/IV toxin-antitoxin (TA) system DarTG, which plays a crucial role in controlling bacterial growth and bacteriophage infection. In case of phage infection, DarT toxin ADP-ribosylates DNA, which inhibits both viral DNA and RNA synthesis and leads to abortive infection. ADP-ribosylates ssDNA on the second thymidine of the consensus sequence 5'-TNTC-3'; the protein does not auto-modify. Arg-51 is highly flexible, allowing it to assume multiple positions in the crystal structures. Its toxic effect is neutralized by cognate antitoxin DarG. The protein is DNA ADP-ribosyl transferase of Thermus sp. (strain 2.9).